The sequence spans 319 residues: uncharacterized protein (319 aa).

The segment covering 268–312 has biased composition (low complexity); sequence SSVVAVTHPPSTTSTTTSVSETLSSFIAPSDLSSQPSPSSHPSSP. Residues 268–319 form a disordered region; sequence SSVVAVTHPPSTTSTTTSVSETLSSFIAPSDLSSQPSPSSHPSSPFGNHNEF.

This is an uncharacterized protein from Lepidoptera (butterflies and moths).